The chain runs to 380 residues: Probable protein phosphatase 2C 34 (380 aa).

Positions 32-335 constitute a PPM-type phosphatase domain; it reads AAGEFSMAAA…DDISVIVVYL (304 aa). The Mn(2+) site is built by aspartate 66, glycine 67, aspartate 267, and aspartate 326.

This sequence belongs to the PP2C family. Mg(2+) is required as a cofactor. Mn(2+) serves as cofactor.

The enzyme catalyses O-phospho-L-seryl-[protein] + H2O = L-seryl-[protein] + phosphate. The catalysed reaction is O-phospho-L-threonyl-[protein] + H2O = L-threonyl-[protein] + phosphate. This is Probable protein phosphatase 2C 34 (BIPP2C2) from Oryza sativa subsp. indica (Rice).